A 1109-amino-acid polypeptide reads, in one-letter code: RNA2 polyprotein (1109 aa).

Belongs to the nepoviruses RNA2 polyprotein family. Specific enzymatic cleavages in vivo by the P1 encoded 3C-like protease yield mature proteins.

It is found in the host cell junction. It localises to the host plasmodesma. The protein resides in the host cytoplasm. The protein localises to the host nucleus. Its subcellular location is the virion. Implicated in RNA2 replication. Could also be required for nematode transmission of the virus. Its function is as follows. Transports viral genome to neighboring plant cells directly through plasmosdesmata, without any budding. The movement protein allows efficient cell to cell propagation, by bypassing the host cell wall barrier. Acts by forming a tubular structure at the host plasmodesmata, enlarging it enough to allow free passage of virion capsids. The protein is RNA2 polyprotein of Vitis rupestris (Grape).